The primary structure comprises 412 residues: Solute carrier family 22 member 18 (412 aa).

Transmembrane regions (helical) follow at residues 16 to 36, 51 to 71, 117 to 137, 148 to 168, 176 to 196, 232 to 252, 264 to 284, 294 to 314, 316 to 336, and 380 to 400; these read GIIILTYVLAALELTCLFMQF, VSFGYLQTTFGVLQLLGGPVF, LPAALMHTLPAAQMVITDLTA, LGLCFGIGVIFGSLLGGTLST, AFLAFVVTLLGAVLSFTCIPV, FLVKVISGFPSGLFMVMFSII, AGYLMSFFGILQMMIQGLVIG, ALLRSSVLVFAVVGLGMALMS, VFHFCLLLPGLVFSLCALNIV, and GVSILGHVQLMVNLLVLLVLW.

Belongs to the major facilitator (TC 2.A.1) superfamily. Organic cation transporter (TC 2.A.1.19) family.

The protein localises to the apical cell membrane. Functionally, may act as a transporter of organic cations based on a proton efflux antiport mechanism. May play a role in the transport of chloroquine and quinidine-related compounds in kidney. Plays a role in the regulation of lipid metabolism. In Rattus norvegicus (Rat), this protein is Solute carrier family 22 member 18 (Slc67a1).